A 378-amino-acid polypeptide reads, in one-letter code: Virion membrane protein A16 (378 aa).

A lipid anchor (N-myristoyl glycine; by host) is attached at glycine 2. Residues 2–342 (GAAVTLNRIK…VVKDKIKLPT (341 aa)) lie on the Virion surface side of the membrane. The helical; Signal-anchor for type II membrane protein transmembrane segment at 343–363 (WLGAAITLVVISVIFYFISIY) threads the bilayer. Topologically, residues 364 to 378 (SRPKIKTNDINVRRR) are intravirion.

The protein belongs to the poxviridae A16/G9/J5 family. Part of a stable entry-fusion complex (EFC) which is at least composed of proteins A16, A21, A28, G3, G9, H2, J5, and L5. Formation of the viral membrane is necessary for the assembly of the complex. Interacts with G9. Post-translationally, most cysteines are linked by disulfide bonds. They are created by the viral disulfide bond formation pathway, a poxvirus-specific redox pathway that operates on the cytoplasmic side of the MV membranes.

The protein localises to the virion membrane. Its function is as follows. Envelope protein part of the entry-fusion complex responsible for the virus membrane fusion with host cell membrane during virus entry. Also plays a role in cell-cell fusion (syncytium formation). This Oryctolagus cuniculus (Rabbit) protein is Virion membrane protein A16.